Here is a 146-residue protein sequence, read N- to C-terminus: Hemoglobin subunit beta (146 aa).

An N-acetylvaline modification is found at valine 1. A Globin domain is found at 2–146 (HLSGEEKAAV…VANALAHKYH (145 aa)). At threonine 12 the chain carries Phosphothreonine. Serine 44 is modified (phosphoserine). At lysine 59 the chain carries N6-acetyllysine. Histidine 63 is a binding site for heme b. Position 82 is an N6-acetyllysine (lysine 82). Position 92 (histidine 92) interacts with heme b. An S-nitrosocysteine modification is found at cysteine 93. Position 144 is an N6-acetyllysine (lysine 144).

The protein belongs to the globin family. In terms of assembly, heterotetramer of two alpha chains and two beta chains. In terms of tissue distribution, red blood cells.

Involved in oxygen transport from the lung to the various peripheral tissues. In Pteropus alecto (Black flying fox), this protein is Hemoglobin subunit beta (HBB).